Here is a 121-residue protein sequence, read N- to C-terminus: Small ribosomal subunit protein uS13 (121 aa).

Residues 96 to 121 (PVRGQNTKNNARTRKGKAVAIAGKKK) form a disordered region. Positions 106-121 (ARTRKGKAVAIAGKKK) are enriched in basic residues.

The protein belongs to the universal ribosomal protein uS13 family. As to quaternary structure, part of the 30S ribosomal subunit. Forms a loose heterodimer with protein S19. Forms two bridges to the 50S subunit in the 70S ribosome.

Functionally, located at the top of the head of the 30S subunit, it contacts several helices of the 16S rRNA. In the 70S ribosome it contacts the 23S rRNA (bridge B1a) and protein L5 of the 50S subunit (bridge B1b), connecting the 2 subunits; these bridges are implicated in subunit movement. Contacts the tRNAs in the A and P-sites. The chain is Small ribosomal subunit protein uS13 from Streptococcus gordonii (strain Challis / ATCC 35105 / BCRC 15272 / CH1 / DL1 / V288).